The sequence spans 180 residues: Insulin-like growth factor 2 (180 aa).

The N-terminal stretch at 1-24 (MGIPVGKSMLVLLISLAFALCCIA) is a signal peptide. Residues 25–52 (AYGPGETLCGGELVDTLQFVCSDRGFYF) form a b region. Intrachain disulfides connect Cys33-Cys71, Cys45-Cys84, and Cys70-Cys75. A c region spans residues 53 to 64 (SRPSSRANRRSR). Residues 65 to 85 (GIVEECCFRSCDLALLETYCA) are a. The segment at 86-91 (TPAKSE) is d. Positions 92–180 (RDVSTSQAVL…ASSEMSSNHQ (89 aa)) are cleaved as a propeptide — e peptide. Residues 157–180 (PLIVLPPKDPAHGGASSEMSSNHQ) are disordered.

Belongs to the insulin family. Interacts with MYORG; this interaction is required for IGF2 secretion. Interacts with integrins ITGAV:ITGB3 and ITGA6:ITGB4; integrin-binding is required for IGF2 signaling. Interacts with IGFBP2. Post-translationally, proteolytically processed by PCSK4, proIGF2 is cleaved at Arg-128 and Arg-92 to generate big-IGF2 and mature IGF2. Expressed in the heart, blood serum, kidney and skeletal muscle including the tibialis anterior muscle.

It localises to the secreted. Its function is as follows. The insulin-like growth factors possess growth-promoting activity. Major fetal growth hormone in mammals. Plays a key role in regulating fetoplacental development. IGF2 is influenced by placental lactogen. Also involved in tissue differentiation. In adults, involved in glucose metabolism in adipose tissue, skeletal muscle and liver. Acts as a ligand for integrin which is required for IGF2 signaling. Positively regulates myogenic transcription factor MYOD1 function by facilitating the recruitment of transcriptional coactivators, thereby controlling muscle terminal differentiation. Inhibits myoblast differentiation and modulates metabolism via increasing the mitochondrial respiration rate. In terms of biological role, preptin undergoes glucose-mediated co-secretion with insulin, and acts as a physiological amplifier of glucose-mediated insulin secretion. Exhibits osteogenic properties by increasing osteoblast mitogenic activity through phosphoactivation of MAPK1 and MAPK3. This is Insulin-like growth factor 2 from Mus musculus (Mouse).